The chain runs to 712 residues: Polyribonucleotide nucleotidyltransferase (712 aa).

The Mg(2+) site is built by aspartate 485 and aspartate 491. Positions 552–611 (PKITTISVPKEKIRDVIGQGGKVIREIVEYSGAKIDINDDGTIMIAASSEDQATRAIERI) constitute a KH domain. One can recognise an S1 motif domain in the interval 621 to 689 (GAIYTGKVVK…DRGKVKLSMR (69 aa)).

The protein belongs to the polyribonucleotide nucleotidyltransferase family. Requires Mg(2+) as cofactor.

The protein localises to the cytoplasm. The enzyme catalyses RNA(n+1) + phosphate = RNA(n) + a ribonucleoside 5'-diphosphate. Functionally, involved in mRNA degradation. Catalyzes the phosphorolysis of single-stranded polyribonucleotides processively in the 3'- to 5'-direction. The sequence is that of Polyribonucleotide nucleotidyltransferase from Gluconacetobacter diazotrophicus (strain ATCC 49037 / DSM 5601 / CCUG 37298 / CIP 103539 / LMG 7603 / PAl5).